Consider the following 198-residue polypeptide: V-type proton ATPase subunit E (198 aa).

This sequence belongs to the V-ATPase E subunit family.

In terms of biological role, produces ATP from ADP in the presence of a proton gradient across the membrane. The chain is V-type proton ATPase subunit E from Borrelia hermsii (strain HS1 / DAH).